Here is a 432-residue protein sequence, read N- to C-terminus: Adenylosuccinate synthetase (432 aa).

GTP contacts are provided by residues 13 to 19 and 41 to 43; these read GDEGKGK and GHT. Aspartate 14 serves as the catalytic Proton acceptor. The Mg(2+) site is built by aspartate 14 and glycine 41. IMP is bound by residues 14 to 17, 39 to 42, threonine 130, arginine 144, glutamine 225, threonine 240, and arginine 304; these read DEGK and NAGH. The Proton donor role is filled by histidine 42. 300 to 306 is a binding site for substrate; that stretch reads AVTGRPR. GTP is bound by residues arginine 306, 332-334, and 415-417; these read KLD and STG.

It belongs to the adenylosuccinate synthetase family. As to quaternary structure, homodimer. It depends on Mg(2+) as a cofactor.

It localises to the cytoplasm. It carries out the reaction IMP + L-aspartate + GTP = N(6)-(1,2-dicarboxyethyl)-AMP + GDP + phosphate + 2 H(+). It functions in the pathway purine metabolism; AMP biosynthesis via de novo pathway; AMP from IMP: step 1/2. Plays an important role in the de novo pathway of purine nucleotide biosynthesis. Catalyzes the first committed step in the biosynthesis of AMP from IMP. This is Adenylosuccinate synthetase from Haemophilus influenzae (strain 86-028NP).